A 393-amino-acid polypeptide reads, in one-letter code: S-adenosylmethionine synthase 1 (393 aa).

Glu9 provides a ligand contact to Mg(2+). His15 contributes to the ATP binding site. Glu43 provides a ligand contact to K(+). The L-methionine site is built by Glu56 and Gln99. ATP-binding positions include Asp167 to Lys169, Ser235 to Phe238, Asp246, Arg252 to Lys253, Ala269, Lys273, and Lys277. Residue Asp246 participates in L-methionine binding. Lys277 provides a ligand contact to L-methionine.

The protein belongs to the AdoMet synthase family. Homotetramer. Requires Mn(2+) as cofactor. Mg(2+) is required as a cofactor. It depends on Co(2+) as a cofactor. K(+) serves as cofactor.

The protein resides in the cytoplasm. It catalyses the reaction L-methionine + ATP + H2O = S-adenosyl-L-methionine + phosphate + diphosphate. It functions in the pathway amino-acid biosynthesis; S-adenosyl-L-methionine biosynthesis; S-adenosyl-L-methionine from L-methionine: step 1/1. Functionally, catalyzes the formation of S-adenosylmethionine from methionine and ATP. The reaction comprises two steps that are both catalyzed by the same enzyme: formation of S-adenosylmethionine (AdoMet) and triphosphate, and subsequent hydrolysis of the triphosphate. This is S-adenosylmethionine synthase 1 (METK1) from Solanum tuberosum (Potato).